Consider the following 61-residue polypeptide: Small ribosomal subunit protein uS14 (61 aa).

Residues C24, C27, C40, and C43 each coordinate Zn(2+).

It belongs to the universal ribosomal protein uS14 family. Zinc-binding uS14 subfamily. As to quaternary structure, part of the 30S ribosomal subunit. Contacts proteins S3 and S10. Zn(2+) is required as a cofactor.

Functionally, binds 16S rRNA, required for the assembly of 30S particles and may also be responsible for determining the conformation of the 16S rRNA at the A site. This chain is Small ribosomal subunit protein uS14, found in Leptospira borgpetersenii serovar Hardjo-bovis (strain JB197).